Reading from the N-terminus, the 532-residue chain is Copalyl diphosphate synthase (532 aa).

The DXDDTA motif motif lies at 313 to 318 (DTDDTA). The short motif at 443 to 449 (QSDDGSW) is the QXXDGSW motif element.

The protein belongs to the terpene synthase family. Mg(2+) serves as cofactor.

It catalyses the reaction (2E,6E,10E)-geranylgeranyl diphosphate = (+)-copalyl diphosphate. Involved in the biosynthesis of the mercapturic acid derivative diterpene cyslabdan A, a potentiator of the beta-lactam antibiotic imipenem. Catalyzes the conversion of geranylgeranyl diphosphate (GGDP) into (+)-copalyl diphosphate. The protein is Copalyl diphosphate synthase of Streptomyces cyslabdanicus.